We begin with the raw amino-acid sequence, 273 residues long: Putative pyruvate, phosphate dikinase regulatory protein (273 aa).

153–160 (GVSRTSKS) contacts ADP.

Belongs to the pyruvate, phosphate/water dikinase regulatory protein family. PDRP subfamily.

It catalyses the reaction N(tele)-phospho-L-histidyl/L-threonyl-[pyruvate, phosphate dikinase] + ADP = N(tele)-phospho-L-histidyl/O-phospho-L-threonyl-[pyruvate, phosphate dikinase] + AMP + H(+). It carries out the reaction N(tele)-phospho-L-histidyl/O-phospho-L-threonyl-[pyruvate, phosphate dikinase] + phosphate + H(+) = N(tele)-phospho-L-histidyl/L-threonyl-[pyruvate, phosphate dikinase] + diphosphate. Functionally, bifunctional serine/threonine kinase and phosphorylase involved in the regulation of the pyruvate, phosphate dikinase (PPDK) by catalyzing its phosphorylation/dephosphorylation. In Ehrlichia canis (strain Jake), this protein is Putative pyruvate, phosphate dikinase regulatory protein.